We begin with the raw amino-acid sequence, 379 residues long: Cytochrome b (379 aa).

Helical transmembrane passes span phenylalanine 33–methionine 53, tryptophan 77–isoleucine 98, tryptophan 113–leucine 133, and phenylalanine 178–leucine 198. Heme b-binding residues include histidine 83 and histidine 97. Residues histidine 182 and histidine 196 each coordinate heme b. Position 201 (histidine 201) interacts with a ubiquinone. 4 helical membrane-spanning segments follow: residues tyrosine 226–tyrosine 246, leucine 288–histidine 308, alanine 320–glycine 340, and tyrosine 347–proline 367.

It belongs to the cytochrome b family. In terms of assembly, the cytochrome bc1 complex contains 3 respiratory subunits (MT-CYB, CYC1 and UQCRFS1), 2 core proteins (UQCRC1 and UQCRC2) and probably 6 low-molecular weight proteins. It depends on heme b as a cofactor.

It localises to the mitochondrion inner membrane. Component of the ubiquinol-cytochrome c reductase complex (complex III or cytochrome b-c1 complex) that is part of the mitochondrial respiratory chain. The b-c1 complex mediates electron transfer from ubiquinol to cytochrome c. Contributes to the generation of a proton gradient across the mitochondrial membrane that is then used for ATP synthesis. The chain is Cytochrome b (mt-cyb) from Anguilla rostrata (American eel).